The following is a 924-amino-acid chain: Periplasmic nitrate reductase (924 aa).

The segment at residues 1–29 (MNRRDFIKNTAIASACGVAGLSVPSSVLA) is a signal peptide (tat-type signal). Positions 35–91 (WRWDKAVCRFCGTGCGILVARQDGKIVAVKGDPAAPVNRGLNCIKGYFNAKIMYGED) constitute a 4Fe-4S Mo/W bis-MGD-type domain. The [4Fe-4S] cluster site is built by cysteine 42, cysteine 45, cysteine 49, and cysteine 77. Mo-bis(molybdopterin guanine dinucleotide) contacts are provided by residues lysine 79, glutamine 147, asparagine 172, cysteine 176, 209–216 (WGANMAEM), methionine 417, glutamine 421, asparagine 527, 552–553 (SD), lysine 575, aspartate 602, and 814–823 (TGRVLEHWHS). Tryptophan 890 contributes to the substrate binding site. 2 residues coordinate Mo-bis(molybdopterin guanine dinucleotide): asparagine 898 and lysine 915.

The protein belongs to the prokaryotic molybdopterin-containing oxidoreductase family. NasA/NapA/NarB subfamily. In terms of assembly, component of the periplasmic nitrate reductase NapAB complex composed of NapA and NapB. The cofactor is [4Fe-4S] cluster. Mo-bis(molybdopterin guanine dinucleotide) is required as a cofactor. In terms of processing, predicted to be exported by the Tat system. The position of the signal peptide cleavage has not been experimentally proven.

It is found in the periplasm. It catalyses the reaction 2 Fe(II)-[cytochrome] + nitrate + 2 H(+) = 2 Fe(III)-[cytochrome] + nitrite + H2O. Functionally, catalytic subunit of the periplasmic nitrate reductase complex NapAB. Receives electrons from NapB and catalyzes the reduction of nitrate to nitrite. The protein is Periplasmic nitrate reductase of Campylobacter lari (strain RM2100 / D67 / ATCC BAA-1060).